A 121-amino-acid polypeptide reads, in one-letter code: Small ribosomal subunit protein uS13 (121 aa).

Residues 92–121 (RRGLPVRGQKTKNNSRTRKGPRKTMANKKK) are disordered.

It belongs to the universal ribosomal protein uS13 family. In terms of assembly, part of the 30S ribosomal subunit. Forms a loose heterodimer with protein S19. Forms two bridges to the 50S subunit in the 70S ribosome.

Its function is as follows. Located at the top of the head of the 30S subunit, it contacts several helices of the 16S rRNA. In the 70S ribosome it contacts the 23S rRNA (bridge B1a) and protein L5 of the 50S subunit (bridge B1b), connecting the 2 subunits; these bridges are implicated in subunit movement. Contacts the tRNAs in the A and P-sites. This chain is Small ribosomal subunit protein uS13, found in Oceanobacillus iheyensis (strain DSM 14371 / CIP 107618 / JCM 11309 / KCTC 3954 / HTE831).